A 415-amino-acid polypeptide reads, in one-letter code: NPL4-like protein (415 aa).

An MPN domain is found at 130 to 279 (AASFDRDSAN…FEAFQMSEIC (150 aa)).

It belongs to the NPL4 family.

It localises to the endoplasmic reticulum. It participates in protein degradation; proteasomal ubiquitin-dependent pathway. Its function is as follows. May be part of a complex that binds ubiquitinated proteins and that is necessary for the export of misfolded proteins from the ER to the cytoplasm, where they are degraded by the proteasome. In Oryza sativa subsp. japonica (Rice), this protein is NPL4-like protein.